A 615-amino-acid polypeptide reads, in one-letter code: Delta(14)-sterol reductase LBR (615 aa).

The Tudor domain maps to 1–62 (MPSRKFADGE…DIKPLTSFRQ (62 aa)). Topologically, residues 1–211 (MPSRKFADGE…IRAKDLEFGG (211 aa)) are nuclear. A disordered region spans residues 52–109 (NDIKPLTSFRQRKGGSTSSSPSRRRGSRSRSRSRSPGRPPKSARRSASASHQADIKEA). Position 55 is an N6-acetyllysine (K55). T58 is subject to Phosphothreonine. 2 positions are modified to phosphoserine: S59 and S67. S71 and S86 each carry phosphoserine; by CDK1. Positions 73 to 86 (SRRRGSRSRSRSRS) are enriched in basic residues. Phosphoserine occurs at positions 97 and 99. T118 bears the Phosphothreonine mark. Position 128 is a phosphoserine (S128). T200 is modified (phosphothreonine). A run of 8 helical transmembrane segments spans residues 212–232 (VPGV…LLLM), 258–278 (VFGV…LPIG), 299–319 (FYAF…GVEF), 326–346 (FLQF…YLYM), 386–406 (FCEL…MLLA), 447–467 (IIHD…VPFI), 481–501 (EVSW…YVIF), and 561–581 (PCGF…MLLV). N6-acetyllysine occurs at positions 594 and 601.

It belongs to the ERG4/ERG24 family. In terms of assembly, interacts with CBX5. Interacts with DNA. Interaction with DNA is sequence independent with higher affinity for supercoiled and relaxed circular DNA than linear DNA. Interacts with lamin B. Interacts with CLNK. Interacts with TMEM147; promoting LBR localization to the nucleus inner membrane. In terms of processing, phosphorylated by CDK1 in mitosis when the inner nuclear membrane breaks down into vesicles that dissociate from the lamina and the chromatin. It is phosphorylated by different protein kinases in interphase when the membrane is associated with these structures. Phosphorylation of LBR and HP1 proteins may be responsible for some of the alterations in chromatin organization and nuclear structure which occur at various times during the cell cycle. Phosphorylated by SRPK1. In late anaphase LBR is dephosphorylated, probably by PP1 and/or PP2A, allowing reassociation with chromatin. Expressed in the bone marrow, liver, heart, adrenal gland, lung, placenta and uterus. Expressed in osteoclasts and osteoblast-like cells.

It is found in the nucleus inner membrane. The protein resides in the endoplasmic reticulum membrane. It localises to the cytoplasm. Its subcellular location is the nucleus. It catalyses the reaction 5alpha-cholest-8,14-dien-3beta-ol + NADPH + H(+) = 5alpha-cholest-8-en-3beta-ol + NADP(+). It carries out the reaction 4,4-dimethyl-5alpha-cholesta-8,24-dien-3beta-ol + NADP(+) = 4,4-dimethyl-5alpha-cholesta-8,14,24-trien-3beta-ol + NADPH + H(+). The enzyme catalyses 4,4-dimethyl-8,14-cholestadien-3beta-ol + NADPH + H(+) = 4,4-dimethyl-5alpha-cholest-8-en-3beta-ol + NADP(+). Its pathway is steroid biosynthesis; cholesterol biosynthesis. In terms of biological role, catalyzes the reduction of the C14-unsaturated bond of lanosterol, as part of the metabolic pathway leading to cholesterol biosynthesis. Plays a critical role in myeloid cell cholesterol biosynthesis which is essential to both myeloid cell growth and functional maturation. Mediates the activation of NADPH oxidases, perhaps by maintaining critical levels of cholesterol required for membrane lipid raft formation during neutrophil differentiation. Anchors the lamina and the heterochromatin to the inner nuclear membrane. This Homo sapiens (Human) protein is Delta(14)-sterol reductase LBR (LBR).